The chain runs to 310 residues: Ribosomal RNA small subunit methyltransferase H (310 aa).

S-adenosyl-L-methionine contacts are provided by residues 33–35 (AGH), aspartate 53, phenylalanine 79, aspartate 100, and glutamine 107.

This sequence belongs to the methyltransferase superfamily. RsmH family.

Its subcellular location is the cytoplasm. The catalysed reaction is cytidine(1402) in 16S rRNA + S-adenosyl-L-methionine = N(4)-methylcytidine(1402) in 16S rRNA + S-adenosyl-L-homocysteine + H(+). In terms of biological role, specifically methylates the N4 position of cytidine in position 1402 (C1402) of 16S rRNA. The protein is Ribosomal RNA small subunit methyltransferase H of Clostridium botulinum (strain Eklund 17B / Type B).